Here is a 485-residue protein sequence, read N- to C-terminus: Glutamyl-tRNA(Gln) amidotransferase subunit A (485 aa).

Residues Lys-78 and Ser-153 each act as charge relay system in the active site. The active-site Acyl-ester intermediate is the Ser-177.

It belongs to the amidase family. GatA subfamily. Heterotrimer of A, B and C subunits.

It catalyses the reaction L-glutamyl-tRNA(Gln) + L-glutamine + ATP + H2O = L-glutaminyl-tRNA(Gln) + L-glutamate + ADP + phosphate + H(+). Allows the formation of correctly charged Gln-tRNA(Gln) through the transamidation of misacylated Glu-tRNA(Gln) in organisms which lack glutaminyl-tRNA synthetase. The reaction takes place in the presence of glutamine and ATP through an activated gamma-phospho-Glu-tRNA(Gln). In Trichlorobacter lovleyi (strain ATCC BAA-1151 / DSM 17278 / SZ) (Geobacter lovleyi), this protein is Glutamyl-tRNA(Gln) amidotransferase subunit A.